The primary structure comprises 169 residues: Cell cycle link protein (169 aa).

The tract at residues 9–22 is binding to host SKP1 protein; that stretch reads LPEELRQKIVHDHL. The LXCXE motif, interaction with host RBR motif lies at 110-114; it reads LLCRE.

Belongs to the nanovirus Clink protein family. As to quaternary structure, interacts with host SKP1. Interacts (via LXCXE domain) with host retinoblastoma-related protein 1 (RBR1). Interacts (via LXCXE domain) with retinoblastoma-related proteins (RBR).

In terms of biological role, interacts with and disrupts the function of host retinoblastoma-related proteins RBR, which are key regulators of the cell cycle. Induces transcriptional activation of E2F-regulated S-phase and G2/M-phase-specific genes. Inactivation of the ability of RBR to arrest the cell cycle leads to the stimulation of viral DNA replication. This is Cell cycle link protein (DNA-C) from Cicer arietinum (Chickpea).